Here is a 72-residue protein sequence, read N- to C-terminus: Translation initiation factor IF-1 (72 aa).

One can recognise an S1-like domain in the interval 1 to 72; that stretch reads MTKEDSFEMH…SKGRIIFRSR (72 aa).

The protein belongs to the IF-1 family. In terms of assembly, component of the 30S ribosomal translation pre-initiation complex which assembles on the 30S ribosome in the order IF-2 and IF-3, IF-1 and N-formylmethionyl-tRNA(fMet); mRNA recruitment can occur at any time during PIC assembly.

Its subcellular location is the cytoplasm. Functionally, one of the essential components for the initiation of protein synthesis. Stabilizes the binding of IF-2 and IF-3 on the 30S subunit to which N-formylmethionyl-tRNA(fMet) subsequently binds. Helps modulate mRNA selection, yielding the 30S pre-initiation complex (PIC). Upon addition of the 50S ribosomal subunit IF-1, IF-2 and IF-3 are released leaving the mature 70S translation initiation complex. The polypeptide is Translation initiation factor IF-1 (Blochmanniella pennsylvanica (strain BPEN)).